Reading from the N-terminus, the 157-residue chain is Globin (157 aa).

Position 1 is an N-acetylglycine (G1). The Globin domain maps to 8–155 (SLSADQKAAI…MANIIDAEQK (148 aa)). Residues H70 and H102 each contribute to the heme b site.

The protein belongs to the globin family. Monomer.

The polypeptide is Globin (Nerita albicilla (Ox-palate nerite)).